A 358-amino-acid polypeptide reads, in one-letter code: DnaJ homolog subfamily B member 11 (358 aa).

The signal sequence occupies residues 1–22; that stretch reads MAPQNLSTFCLLLLYLIGAVIA. The J domain maps to 25 to 90; it reads DFYKILGVPR…EKRKQYDTYG (66 aa). Position 188 is a phosphothreonine (Thr-188). Asn-261 carries N-linked (GlcNAc...) asparagine glycosylation.

Part of a large chaperone multiprotein complex comprising DNAJB11, HSP90B1, HSPA5, HYOU, PDIA2, PDIA4, PDIA6, PPIB, SDF2L1, UGGT1 and very small amounts of ERP29, but not, or at very low levels, CALR nor CANX. Binds to denatured substrates in an ATP-independent manner. Interacts via the J domain with HSPA5 in an ATP-dependent manner. Contains high-mannose Endo H-sensitive carbohydrates. In terms of processing, cys-169, Cys-171, Cys-193 and Cys-196 form intramolecular disulfide bonds. The preferential partner for each Cys is not known. Post-translationally, thr-188 was reported to be phosphorylated upon DNA damage by ATM or ATR; however as this position has been shown to be in the ER lumen, the in vivo relevance is not proven. In terms of tissue distribution, widely expressed.

It is found in the endoplasmic reticulum lumen. As a co-chaperone for HSPA5 it is required for proper folding, trafficking or degradation of proteins. Binds directly to both unfolded proteins that are substrates for ERAD and nascent unfolded peptide chains, but dissociates from the HSPA5-unfolded protein complex before folding is completed. May help recruiting HSPA5 and other chaperones to the substrate. Stimulates HSPA5 ATPase activity. It is necessary for maturation and correct trafficking of PKD1. This chain is DnaJ homolog subfamily B member 11 (DNAJB11), found in Homo sapiens (Human).